The sequence spans 430 residues: Adenylosuccinate synthetase (430 aa).

GTP contacts are provided by residues 12 to 18 and 40 to 42; these read GDEGKGK and GHT. Asp-13 acts as the Proton acceptor in catalysis. Mg(2+) contacts are provided by Asp-13 and Gly-40. IMP-binding positions include 13-16, 38-41, Thr-128, Arg-142, Gln-223, Thr-238, and Arg-302; these read DEGK and NAGH. The active-site Proton donor is the His-41. 298–304 is a substrate binding site; it reads TTTGRPR. GTP is bound by residues Arg-304, 330–332, and 412–414; these read SID and SVG.

Belongs to the adenylosuccinate synthetase family. Homodimer. Mg(2+) is required as a cofactor.

Its subcellular location is the cytoplasm. The enzyme catalyses IMP + L-aspartate + GTP = N(6)-(1,2-dicarboxyethyl)-AMP + GDP + phosphate + 2 H(+). It participates in purine metabolism; AMP biosynthesis via de novo pathway; AMP from IMP: step 1/2. Plays an important role in the de novo pathway of purine nucleotide biosynthesis. Catalyzes the first committed step in the biosynthesis of AMP from IMP. This chain is Adenylosuccinate synthetase, found in Streptococcus pyogenes serotype M2 (strain MGAS10270).